The primary structure comprises 321 residues: Glucokinase (321 aa).

Residue 8–13 (GDVGGT) participates in ATP binding.

It belongs to the bacterial glucokinase family.

Its subcellular location is the cytoplasm. The enzyme catalyses D-glucose + ATP = D-glucose 6-phosphate + ADP + H(+). The polypeptide is Glucokinase (Shigella boydii serotype 18 (strain CDC 3083-94 / BS512)).